Here is a 495-residue protein sequence, read N- to C-terminus: Maintenance of mitochondrial morphology protein 1 (495 aa).

Over 1–22 the chain is Lumenal; that stretch reads MALQQHEPAPFAPQSSLSFTQG. Residues 23 to 43 traverse the membrane as a helical segment; the sequence is FLLGQLSVVLLIGAFIKFFIF. Topologically, residues 44 to 495 are cytoplasmic; that stretch reads GEAPPPPSRG…PVGTPGIPDN (452 aa). Disordered stretches follow at residues 63 to 94, 269 to 320, 382 to 428, and 440 to 495; these read YSSV…PSTS, ASTE…SPKS, WPRM…EPEG, and GLGA…IPDN. Composition is skewed to polar residues over residues 65–74 and 82–94; these read SVYSPPQDSQ and STSN…PSTS. Residues 128–379 form the SMP-LTD domain; that stretch reads QPESLDWFNV…EPRVQVVGLP (252 aa). The span at 271-289 shows a compositional bias: pro residues; the sequence is TEPPEPLQTPAGSPAPPTS. Over residues 418–428 the composition is skewed to basic and acidic residues; it reads FSDDHGREPEG. Polar residues predominate over residues 458-469; the sequence is RSSSMTRQQSGG.

The protein belongs to the MMM1 family. Homodimer. Component of the ER-mitochondria encounter structure (ERMES) or MDM complex, composed of mmm1, mdm10, mdm12 and mdm34. An MMM1 homodimer associates with one molecule of mdm12 on each side in a pairwise head-to-tail manner, and the SMP-LTD domains of mmm1 and mdm12 generate a continuous hydrophobic tunnel for phospholipid trafficking.

Its subcellular location is the endoplasmic reticulum membrane. In terms of biological role, component of the ERMES/MDM complex, which serves as a molecular tether to connect the endoplasmic reticulum (ER) and mitochondria. Components of this complex are involved in the control of mitochondrial shape and protein biogenesis, and function in nonvesicular lipid trafficking between the ER and mitochondria. The mdm12-mmm1 subcomplex functions in the major beta-barrel assembly pathway that is responsible for biogenesis of all outer membrane beta-barrel proteins, and acts in a late step after the SAM complex. The mdm10-mdm12-mmm1 subcomplex further acts in the TOM40-specific pathway after the action of the mdm12-mmm1 complex. Essential for establishing and maintaining the structure of mitochondria and maintenance of mtDNA nucleoids. In Penicillium rubens (strain ATCC 28089 / DSM 1075 / NRRL 1951 / Wisconsin 54-1255) (Penicillium chrysogenum), this protein is Maintenance of mitochondrial morphology protein 1.